Here is a 123-residue protein sequence, read N- to C-terminus: Ribosome-binding factor A (123 aa).

This sequence belongs to the RbfA family. Monomer. Binds 30S ribosomal subunits, but not 50S ribosomal subunits or 70S ribosomes.

Its subcellular location is the cytoplasm. Its function is as follows. One of several proteins that assist in the late maturation steps of the functional core of the 30S ribosomal subunit. Associates with free 30S ribosomal subunits (but not with 30S subunits that are part of 70S ribosomes or polysomes). Required for efficient processing of 16S rRNA. May interact with the 5'-terminal helix region of 16S rRNA. The protein is Ribosome-binding factor A of Neisseria meningitidis serogroup B (strain ATCC BAA-335 / MC58).